A 306-amino-acid chain; its full sequence is Aspartate carbamoyltransferase catalytic subunit (306 aa).

Carbamoyl phosphate-binding residues include arginine 55 and threonine 56. L-aspartate is bound at residue lysine 84. The carbamoyl phosphate site is built by arginine 105, histidine 133, and glutamine 136. L-aspartate contacts are provided by arginine 166 and arginine 227. Leucine 265 and proline 266 together coordinate carbamoyl phosphate.

This sequence belongs to the aspartate/ornithine carbamoyltransferase superfamily. ATCase family. In terms of assembly, heterododecamer (2C3:3R2) of six catalytic PyrB chains organized as two trimers (C3), and six regulatory PyrI chains organized as three dimers (R2).

It catalyses the reaction carbamoyl phosphate + L-aspartate = N-carbamoyl-L-aspartate + phosphate + H(+). It participates in pyrimidine metabolism; UMP biosynthesis via de novo pathway; (S)-dihydroorotate from bicarbonate: step 2/3. Catalyzes the condensation of carbamoyl phosphate and aspartate to form carbamoyl aspartate and inorganic phosphate, the committed step in the de novo pyrimidine nucleotide biosynthesis pathway. This Aeromonas hydrophila subsp. hydrophila (strain ATCC 7966 / DSM 30187 / BCRC 13018 / CCUG 14551 / JCM 1027 / KCTC 2358 / NCIMB 9240 / NCTC 8049) protein is Aspartate carbamoyltransferase catalytic subunit.